Here is a 448-residue protein sequence, read N- to C-terminus: Adenylosuccinate synthetase (448 aa).

GTP is bound by residues 22–28 and 50–52; these read GDEGKGK and GHT. Asp-23 (proton acceptor) is an active-site residue. Mg(2+) contacts are provided by Asp-23 and Gly-50. IMP contacts are provided by residues 23–26, 48–51, Thr-139, Arg-153, Gln-234, Thr-249, and Arg-321; these read DEGK and NAGH. His-51 (proton donor) is an active-site residue. 317–323 serves as a coordination point for substrate; that stretch reads SVTGRPR. GTP contacts are provided by residues Arg-323, 349–351, and 431–433; these read KLD and STG.

The protein belongs to the adenylosuccinate synthetase family. As to quaternary structure, homodimer. The cofactor is Mg(2+).

It is found in the cytoplasm. It carries out the reaction IMP + L-aspartate + GTP = N(6)-(1,2-dicarboxyethyl)-AMP + GDP + phosphate + 2 H(+). The protein operates within purine metabolism; AMP biosynthesis via de novo pathway; AMP from IMP: step 1/2. Plays an important role in the de novo pathway of purine nucleotide biosynthesis. Catalyzes the first committed step in the biosynthesis of AMP from IMP. The sequence is that of Adenylosuccinate synthetase from Paraburkholderia phytofirmans (strain DSM 17436 / LMG 22146 / PsJN) (Burkholderia phytofirmans).